The chain runs to 255 residues: Ribosomal RNA small subunit methyltransferase G (255 aa).

S-adenosyl-L-methionine-binding positions include Gly89, Phe94, 112–114 (DST), 140–141 (VE), and Arg159.

This sequence belongs to the methyltransferase superfamily. RNA methyltransferase RsmG family.

The protein resides in the cytoplasm. In terms of biological role, specifically methylates the N7 position of a guanine in 16S rRNA. The protein is Ribosomal RNA small subunit methyltransferase G of Trichodesmium erythraeum (strain IMS101).